Reading from the N-terminus, the 1252-residue chain is HEAT repeat-containing protein 6 (1252 aa).

An HEAT 1 repeat occupies 230–269; sequence PDLLGKSGLLMKLSDVTHSDPEVRRAAVHCMANLCLSVPG. Positions 365–417 are disordered; the sequence is DGRSPVKPQQPESSAARPSANKKKKYKVKPKKTQQGEKAEEEEPYGEVDAAPG. The segment covering 384-396 has biased composition (basic residues); sequence ANKKKKYKVKPKK. A phosphoserine mark is found at Ser-471 and Ser-474. 3 HEAT repeats span residues 524–562, 586–624, and 630–667; these read ELGS…GSKQ, SSIR…NAPY, and SLLT…THAP. Thr-689 is modified (phosphothreonine). Ser-714 carries the phosphoserine modification.

The sequence is that of HEAT repeat-containing protein 6 (Heatr6) from Rattus norvegicus (Rat).